The primary structure comprises 179 residues: MFDLGFWEVLIIMLIGLLILGPERMARAVRMAGLYMGKARAAFNAAKSEVERELQVEEMRKATESVRKDVDKVRKDVEKNARRFEAEADGVGKTFRDVGRQADDAAKGAASGAGGDDARSAGAGDPSGLTDQRGSDQPPAGGGRTAAGERGEPAEAAPAQQSEDTARKGQGGGGEEKRQ.

A helical transmembrane segment spans residues 1-21 (MFDLGFWEVLIIMLIGLLILG). Composition is skewed to basic and acidic residues over residues 75–86 (KDVEKNARRFEA) and 94–106 (TFRD…DDAA). The disordered stretch occupies residues 75–179 (KDVEKNARRF…QGGGGEEKRQ (105 aa)).

The protein belongs to the TatB family. In terms of assembly, the Tat system comprises two distinct complexes: a TatABC complex, containing multiple copies of TatA, TatB and TatC subunits, and a separate TatA complex, containing only TatA subunits. Substrates initially bind to the TatABC complex, which probably triggers association of the separate TatA complex to form the active translocon.

The protein localises to the cell inner membrane. In terms of biological role, part of the twin-arginine translocation (Tat) system that transports large folded proteins containing a characteristic twin-arginine motif in their signal peptide across membranes. Together with TatC, TatB is part of a receptor directly interacting with Tat signal peptides. TatB may form an oligomeric binding site that transiently accommodates folded Tat precursor proteins before their translocation. The chain is Sec-independent protein translocase protein TatB from Alkalilimnicola ehrlichii (strain ATCC BAA-1101 / DSM 17681 / MLHE-1).